The primary structure comprises 183 residues: uncharacterized protein (183 aa).

This is an uncharacterized protein from Methanocaldococcus jannaschii (strain ATCC 43067 / DSM 2661 / JAL-1 / JCM 10045 / NBRC 100440) (Methanococcus jannaschii).